The sequence spans 286 residues: MSIISTKYLLQDAQANGYAVPAFNIHNAETIQAILEVCSEMRSPVILAGTPGTFKHIALEEIYALCSAYSTTYNMPLALHLDHHESLDDIRRKVHAGVRSAMIDGSHFPFDENVKLVKSVVDFCHSQDCSVEAELGRLGGVEDDMSVDAESAFLTDPQEAKRFVELTGVDSLAVAIGTAHGLYSKTPKIDFQRLAEIREVVDVPLVLHGASDVPDEFVRRTIELGVTKVNVATELKIAFAGAVKAWFAENPQGNDPRYYMRVGMDAMKEVVRNKINVCGSANLISA.

The Proton donor role is filled by Asp-82. 2 residues coordinate Zn(2+): His-83 and His-180. Position 181 (Gly-181) interacts with dihydroxyacetone phosphate. Zn(2+) is bound at residue His-208. Dihydroxyacetone phosphate is bound by residues 209-211 and 230-233; these read GAS and NVAT.

This sequence belongs to the class II fructose-bisphosphate aldolase family. TagBP aldolase KbaY subfamily. In terms of assembly, homotetramer. Forms a complex with KbaZ. Zn(2+) is required as a cofactor.

It catalyses the reaction D-tagatofuranose 1,6-bisphosphate = D-glyceraldehyde 3-phosphate + dihydroxyacetone phosphate. Its pathway is carbohydrate metabolism; D-tagatose 6-phosphate degradation; D-glyceraldehyde 3-phosphate and glycerone phosphate from D-tagatose 6-phosphate: step 2/2. Functionally, catalytic subunit of the tagatose-1,6-bisphosphate aldolase KbaYZ, which catalyzes the reversible aldol condensation of dihydroxyacetone phosphate (DHAP or glycerone-phosphate) with glyceraldehyde 3-phosphate (G3P) to produce tagatose 1,6-bisphosphate (TBP). Requires KbaZ subunit for full activity and stability. The chain is D-tagatose-1,6-bisphosphate aldolase subunit KbaY from Escherichia coli O7:K1 (strain IAI39 / ExPEC).